The chain runs to 470 residues: Argininosuccinate lyase (470 aa).

This sequence belongs to the lyase 1 family. Argininosuccinate lyase subfamily.

It localises to the cytoplasm. It catalyses the reaction 2-(N(omega)-L-arginino)succinate = fumarate + L-arginine. It functions in the pathway amino-acid biosynthesis; L-arginine biosynthesis; L-arginine from L-ornithine and carbamoyl phosphate: step 3/3. This chain is Argininosuccinate lyase, found in Mycobacterium sp. (strain JLS).